Consider the following 332-residue polypeptide: tRNA-dihydrouridine(20/20a) synthase (332 aa).

FMN is bound by residues 20-22 (PMM) and glutamine 73. The active-site Proton donor is the cysteine 103. FMN is bound by residues lysine 142, histidine 174, 214–216 (NGG), and 236–237 (GR).

Belongs to the Dus family. DusA subfamily. FMN serves as cofactor.

The enzyme catalyses 5,6-dihydrouridine(20) in tRNA + NADP(+) = uridine(20) in tRNA + NADPH + H(+). It catalyses the reaction 5,6-dihydrouridine(20) in tRNA + NAD(+) = uridine(20) in tRNA + NADH + H(+). The catalysed reaction is 5,6-dihydrouridine(20a) in tRNA + NADP(+) = uridine(20a) in tRNA + NADPH + H(+). It carries out the reaction 5,6-dihydrouridine(20a) in tRNA + NAD(+) = uridine(20a) in tRNA + NADH + H(+). Functionally, catalyzes the synthesis of 5,6-dihydrouridine (D), a modified base found in the D-loop of most tRNAs, via the reduction of the C5-C6 double bond in target uridines. Specifically modifies U20 and U20a in tRNAs. This is tRNA-dihydrouridine(20/20a) synthase from Pseudomonas aeruginosa (strain ATCC 15692 / DSM 22644 / CIP 104116 / JCM 14847 / LMG 12228 / 1C / PRS 101 / PAO1).